Consider the following 305-residue polypeptide: Acetylglutamate kinase (305 aa).

Substrate-binding positions include 67–68 (GG), Arg-89, and Asn-190.

Belongs to the acetylglutamate kinase family. ArgB subfamily.

Its subcellular location is the cytoplasm. The catalysed reaction is N-acetyl-L-glutamate + ATP = N-acetyl-L-glutamyl 5-phosphate + ADP. It functions in the pathway amino-acid biosynthesis; L-arginine biosynthesis; N(2)-acetyl-L-ornithine from L-glutamate: step 2/4. In terms of biological role, catalyzes the ATP-dependent phosphorylation of N-acetyl-L-glutamate. In Bifidobacterium longum (strain NCC 2705), this protein is Acetylglutamate kinase.